A 123-amino-acid polypeptide reads, in one-letter code: Keratin-associated protein 2-2 (123 aa).

The interval 5 to 112 (CCGSTFSSLS…SVQSPCGQPT (108 aa)) is 11 X 5 AA repeats of C-C-[CDPQRWG]-[APRS]-[CIPSTVD].

This sequence belongs to the KRTAP type 2 family. In terms of assembly, interacts with hair keratins.

Functionally, in the hair cortex, hair keratin intermediate filaments are embedded in an interfilamentous matrix, consisting of hair keratin-associated proteins (KRTAP), which are essential for the formation of a rigid and resistant hair shaft through their extensive disulfide bond cross-linking with abundant cysteine residues of hair keratins. The matrix proteins include the high-sulfur and high-glycine-tyrosine keratins. In Homo sapiens (Human), this protein is Keratin-associated protein 2-2 (KRTAP2-2).